The primary structure comprises 330 residues: D-lactate dehydrogenase (330 aa).

Residues 156-157 (RI), aspartate 176, 206-207 (VP), 233-235 (AAR), and aspartate 259 each bind NAD(+). Residue arginine 235 is part of the active site. Residue glutamate 264 is part of the active site. The active-site Proton donor is the histidine 296.

It belongs to the D-isomer specific 2-hydroxyacid dehydrogenase family.

The catalysed reaction is (R)-lactate + NAD(+) = pyruvate + NADH + H(+). The chain is D-lactate dehydrogenase (ldhD) from Staphylococcus aureus (strain MRSA252).